Consider the following 156-residue polypeptide: Small ribosomal subunit protein uS7 (156 aa).

Belongs to the universal ribosomal protein uS7 family. Part of the 30S ribosomal subunit. Contacts proteins S9 and S11.

Functionally, one of the primary rRNA binding proteins, it binds directly to 16S rRNA where it nucleates assembly of the head domain of the 30S subunit. Is located at the subunit interface close to the decoding center, probably blocks exit of the E-site tRNA. This is Small ribosomal subunit protein uS7 from Paenarthrobacter aurescens (strain TC1).